The primary structure comprises 336 residues: Ornithine carbamoyltransferase (336 aa).

Residues 56-59 (STRT), Q83, R107, and 134-137 (HPTQ) each bind carbamoyl phosphate. Residues N168, D232, and 236–237 (SM) each bind L-ornithine. Carbamoyl phosphate-binding positions include 274–275 (CL) and R320.

It belongs to the aspartate/ornithine carbamoyltransferase superfamily. OTCase family.

The protein localises to the cytoplasm. It catalyses the reaction carbamoyl phosphate + L-ornithine = L-citrulline + phosphate + H(+). It participates in amino-acid biosynthesis; L-arginine biosynthesis; L-arginine from L-ornithine and carbamoyl phosphate: step 1/3. Reversibly catalyzes the transfer of the carbamoyl group from carbamoyl phosphate (CP) to the N(epsilon) atom of ornithine (ORN) to produce L-citrulline. This is Ornithine carbamoyltransferase from Erwinia tasmaniensis (strain DSM 17950 / CFBP 7177 / CIP 109463 / NCPPB 4357 / Et1/99).